The chain runs to 355 residues: MAHNPEERNNDKQKALDNAISQIEKAFGKGAIMKLKQNPVEKIDTISTGSIALDSALGVGGLPKGRIIEIFGPESSGKTTLALHVIAEAQKKGGLCAFIDAEHALDVIYARKLGVKTDDLVISQPDTGEQALHIVEYLVCSSAVDVIVIDSVAALTPRAEIEGDMGDQHMGLQARLLSHGLRKLTSVVSKANCILIFINQIRMKIGVVYGNPETTTGGNALKFYTSIRLDIRKVGAIKDKENITGNETRVKVVKNKVAPPFREAKFDIMYNEGISKLGEIIDIGAKLGVLEKAGAYYSYNNTRLGQGRENVKSYLKANKEIASEIETKIRDLFKNHDNSIAIEEEREQLLEESVF.

72–79 (GPESSGKT) contacts ATP.

The protein belongs to the RecA family.

Its subcellular location is the cytoplasm. Its function is as follows. Can catalyze the hydrolysis of ATP in the presence of single-stranded DNA, the ATP-dependent uptake of single-stranded DNA by duplex DNA, and the ATP-dependent hybridization of homologous single-stranded DNAs. It interacts with LexA causing its activation and leading to its autocatalytic cleavage. The sequence is that of Protein RecA from Wolbachia pipientis subsp. Culex pipiens (strain wPip).